The sequence spans 1546 residues: DNA-directed RNA polymerase subunit beta' (1546 aa).

Residues Cys57, Cys59, Cys72, and Cys75 each contribute to the Zn(2+) site. Positions 756, 758, and 760 each coordinate Mg(2+). Zn(2+) is bound by residues Cys1130, Cys1211, Cys1218, and Cys1221. Residues 1512–1546 (LEKYGEGSTSSDAVTGGQRYDDTRPGSSINPGYGD) form a disordered region. The span at 1536–1546 (PGSSINPGYGD) shows a compositional bias: polar residues.

The protein belongs to the RNA polymerase beta' chain family. As to quaternary structure, the RNAP catalytic core consists of 2 alpha, 1 beta, 1 beta' and 1 omega subunit. When a sigma factor is associated with the core the holoenzyme is formed, which can initiate transcription. Requires Mg(2+) as cofactor. The cofactor is Zn(2+).

It catalyses the reaction RNA(n) + a ribonucleoside 5'-triphosphate = RNA(n+1) + diphosphate. DNA-dependent RNA polymerase catalyzes the transcription of DNA into RNA using the four ribonucleoside triphosphates as substrates. The sequence is that of DNA-directed RNA polymerase subunit beta' from Deinococcus radiodurans (strain ATCC 13939 / DSM 20539 / JCM 16871 / CCUG 27074 / LMG 4051 / NBRC 15346 / NCIMB 9279 / VKM B-1422 / R1).